A 646-amino-acid polypeptide reads, in one-letter code: Cell surface glycoprotein MUC18 (646 aa).

The N-terminal stretch at 1–23 is a signal peptide; it reads MGLPRLVCAFLLAACCCCPRVAG. Ig-like V-type domains follow at residues 24–129 and 139–242; these read VPGE…YRIQ and PNIQ…REVT. The Extracellular segment spans residues 24–559; the sequence is VPGEAEQPAP…RKLPEPESRG (536 aa). Disulfide bonds link C48–C116, C161–C223, C272–C320, and C365–C407. Residue N56 is glycosylated (N-linked (GlcNAc...) asparagine). 3 Ig-like C2-type domains span residues 244-330, 335-424, and 430-510; these read PVFY…TMIS, PQEL…QLVN, and PPWM…KNTS. Positions 278-299 are disordered; it reads PPPHFSISKQNPSTREAEEETT. 7 N-linked (GlcNAc...) asparagine glycosylation sites follow: N418, N449, N467, N508, N518, N527, and N544. Residues C452 and C499 are joined by a disulfide bond. The tract at residues 525–554 is disordered; the sequence is DSNTTTGLSTSTASPHTRANSTSTERKLPE. A compositionally biased stretch (polar residues) spans 533–547; the sequence is STSTASPHTRANSTS. The chain crosses the membrane as a helical span at residues 560-583; sequence VVIVAVIVCILVLAVLGAVLYFLY. Residues 584 to 646 are Cytoplasmic-facing; it reads KKGKLPCRRS…QGEKYIDLRH (63 aa). 3 positions are modified to phosphoserine: S606, S614, and S628. Positions 620 to 646 are disordered; it reads EMGLLQGSSGDKRAPGDQGEKYIDLRH. The segment covering 629-646 has biased composition (basic and acidic residues); the sequence is GDKRAPGDQGEKYIDLRH.

As to expression, detected in endothelial cells in vascular tissue throughout the body. May appear at the surface of neural crest cells during their embryonic migration. Appears to be limited to vascular smooth muscle in normal adult tissues. Associated with tumor progression and the development of metastasis in human malignant melanoma. Expressed most strongly on metastatic lesions and advanced primary tumors and is only rarely detected in benign melanocytic nevi and thin primary melanomas with a low probability of metastasis.

Its subcellular location is the membrane. Its function is as follows. Plays a role in cell adhesion, and in cohesion of the endothelial monolayer at intercellular junctions in vascular tissue. Its expression may allow melanoma cells to interact with cellular elements of the vascular system, thereby enhancing hematogeneous tumor spread. Could be an adhesion molecule active in neural crest cells during embryonic development. Acts as a surface receptor that triggers tyrosine phosphorylation of FYN and PTK2/FAK1, and a transient increase in the intracellular calcium concentration. The chain is Cell surface glycoprotein MUC18 (MCAM) from Homo sapiens (Human).